The chain runs to 147 residues: Large ribosomal subunit protein bL9 (147 aa).

The protein belongs to the bacterial ribosomal protein bL9 family.

In terms of biological role, binds to the 23S rRNA. The polypeptide is Large ribosomal subunit protein bL9 (Bacteroides fragilis (strain ATCC 25285 / DSM 2151 / CCUG 4856 / JCM 11019 / LMG 10263 / NCTC 9343 / Onslow / VPI 2553 / EN-2)).